Here is a 472-residue protein sequence, read N- to C-terminus: Adenosylhomocysteinase (472 aa).

Residues Thr61, Asp136, and Glu196 each contribute to the substrate site. Thr197–Thr199 lines the NAD(+) pocket. Lys226 and Asp230 together coordinate substrate. Residues Asn231, Gly260 to Gly265, Glu283, Asn318, Ile339 to His341, and Asn384 each bind NAD(+).

This sequence belongs to the adenosylhomocysteinase family. Requires NAD(+) as cofactor.

The protein resides in the cytoplasm. It carries out the reaction S-adenosyl-L-homocysteine + H2O = L-homocysteine + adenosine. Its pathway is amino-acid biosynthesis; L-homocysteine biosynthesis; L-homocysteine from S-adenosyl-L-homocysteine: step 1/1. In terms of biological role, may play a key role in the regulation of the intracellular concentration of adenosylhomocysteine. The polypeptide is Adenosylhomocysteinase (Cupriavidus metallidurans (strain ATCC 43123 / DSM 2839 / NBRC 102507 / CH34) (Ralstonia metallidurans)).